The primary structure comprises 83 residues: Sulfur carrier protein TusA (83 aa).

Cysteine 19 (cysteine persulfide intermediate) is an active-site residue.

It belongs to the sulfur carrier protein TusA family.

It localises to the cytoplasm. Sulfur carrier protein which probably makes part of a sulfur-relay system. This chain is Sulfur carrier protein TusA, found in Vibrio atlanticus (strain LGP32) (Vibrio splendidus (strain Mel32)).